Here is a 1030-residue protein sequence, read N- to C-terminus: Leucine-rich repeat and coiled-coil domain-containing protein 1 (1030 aa).

LRR repeat units lie at residues 7-28 (RNRE…CLNS), 29-50 (NLYS…RHLC), 51-72 (YLQH…DSLA), 73-94 (SLQS…EKLF), 95-116 (NLKK…IPLH), and 121-142 (KLSH…LQST). One can recognise an LRRCT domain in the interval 160 to 200 (NPVCHALGYREIILENLPQLNSLDGLDRSGDPVTAHEVDSM). Residues 298-401 (KSEQTKLKAK…GQILGKPHAI (104 aa)) form a disordered region. A compositionally biased stretch (basic and acidic residues) spans 300-311 (EQTKLKAKRDTD). Polar residues-rich tracts occupy residues 338–368 (KTSQ…SRKQ) and 378–393 (ETSL…STGQ). The stretch at 432–645 (RERRWKAEQV…DLEDEFRAAL (214 aa)) forms a coiled coil.

Belongs to the LRRCC1 family.

The protein localises to the cytoplasm. The protein resides in the cytoskeleton. Its subcellular location is the microtubule organizing center. It localises to the centrosome. It is found in the centriole. Functionally, required for the organization of the mitotic spindle. Maintains the structural integrity of centrosomes during mitosis. The protein is Leucine-rich repeat and coiled-coil domain-containing protein 1 (lrrcc1) of Xenopus laevis (African clawed frog).